Reading from the N-terminus, the 103-residue chain is UPF0235 protein RHECIAT_CH0004196 (103 aa).

It belongs to the UPF0235 family.

This is UPF0235 protein RHECIAT_CH0004196 from Rhizobium etli (strain CIAT 652).